The sequence spans 443 residues: Glucose-6-phosphate isomerase (443 aa).

Catalysis depends on Glu-285, which acts as the Proton donor. Active-site residues include His-306 and Lys-420.

The protein belongs to the GPI family.

It localises to the cytoplasm. The catalysed reaction is alpha-D-glucose 6-phosphate = beta-D-fructose 6-phosphate. Its pathway is carbohydrate biosynthesis; gluconeogenesis. It functions in the pathway carbohydrate degradation; glycolysis; D-glyceraldehyde 3-phosphate and glycerone phosphate from D-glucose: step 2/4. Catalyzes the reversible isomerization of glucose-6-phosphate to fructose-6-phosphate. This is Glucose-6-phosphate isomerase from Staphylococcus saprophyticus subsp. saprophyticus (strain ATCC 15305 / DSM 20229 / NCIMB 8711 / NCTC 7292 / S-41).